The following is a 779-amino-acid chain: Endonuclease MutS2 (779 aa).

ATP is bound at residue 328–335; the sequence is GPNTGGKT. Residues 704 to 779 enclose the Smr domain; the sequence is LDLRGKRYEE…GSGATIVTLG (76 aa).

It belongs to the DNA mismatch repair MutS family. MutS2 subfamily. Homodimer. Binds to stalled ribosomes, contacting rRNA.

Endonuclease that is involved in the suppression of homologous recombination and thus may have a key role in the control of bacterial genetic diversity. In terms of biological role, acts as a ribosome collision sensor, splitting the ribosome into its 2 subunits. Detects stalled/collided 70S ribosomes which it binds and splits by an ATP-hydrolysis driven conformational change. Acts upstream of the ribosome quality control system (RQC), a ribosome-associated complex that mediates the extraction of incompletely synthesized nascent chains from stalled ribosomes and their subsequent degradation. Probably generates substrates for RQC. The sequence is that of Endonuclease MutS2 from Streptococcus agalactiae serotype Ia (strain ATCC 27591 / A909 / CDC SS700).